A 1296-amino-acid polypeptide reads, in one-letter code: Histone-lysine N-methyltransferase EHMT1 (1296 aa).

2 disordered regions span residues 1–111 (MAAA…NHVT) and 170–200 (PQTP…TDVR). N-acetylalanine is present on A2. The segment covering 14-31 (QETKQDCCMKTELLREDT) has biased composition (basic and acidic residues). A Glycyl lysine isopeptide (Lys-Gly) (interchain with G-Cter in SUMO1); alternate cross-link involves residue K23. K23 is covalently cross-linked (Glycyl lysine isopeptide (Lys-Gly) (interchain with G-Cter in SUMO2); alternate). Polar residues predominate over residues 77–89 (NTRASPQEGTNRV). Residues 97 to 106 (VSERDTEVGK) show a composition bias toward basic and acidic residues. Glycyl lysine isopeptide (Lys-Gly) (interchain with G-Cter in SUMO2) cross-links involve residues K191, K229, K232, K315, and K325. Residues 341–470 (SLEMDSEDED…SSPGSMEQAA (130 aa)) are disordered. The span at 342–360 (LEMDSEDEDSDELEDDEDH) shows a compositional bias: acidic residues. Basic and acidic residues predominate over residues 371-391 (EDSRTSKESMSETDRAAKMDG). Positions 392 to 414 (DSEEEQESPDTGEDEDGGDESDL) are enriched in acidic residues. Residue K430 forms a Glycyl lysine isopeptide (Lys-Gly) (interchain with G-Cter in SUMO2) linkage. A Phosphoserine modification is found at S433. Over residues 438–450 (PARKRRRRSRKKP) the composition is skewed to basic residues. Phosphoserine is present on S481. Residues K559, K644, K659, and K729 each participate in a glycyl lysine isopeptide (Lys-Gly) (interchain with G-Cter in SUMO2) cross-link. Residues 653–714 (LAPGQEKSLA…PTSGLSQGPG (62 aa)) are disordered. ANK repeat units lie at residues 735-764 (FHPK…DPNF), 770-799 (SKRS…NIDT), 803-832 (DQRT…QVDP), 836-866 (EGST…DVNC), 870-899 (GGWT…DINI), 903-932 (EENI…DLHA), 936-965 (HGDS…DVTL), and 969-1002 (EGET…DKPV). Positions 903–905 (EEN) are histone H3K9me binding. S1046 bears the Phosphoserine mark. Positions 1058-1121 (QYCVCVDDCS…NCRNRVVQNG (64 aa)) constitute a Pre-SET domain. The Zn(2+) site is built by C1060, C1062, C1066, C1071, C1073, C1103, C1107, C1109, and C1113. Residues 1124-1241 (ARLQLYRTQD…AGEQLGFDYG (118 aa)) form the SET domain. Residues 1134-1136 (MGW), Y1171, and 1198-1199 (NH) each bind S-adenosyl-L-methionine. The interval 1160 to 1179 (DSEADVREEDSYLFDLDNKD) is interaction with histone H3. C1201 contacts Zn(2+). The interval 1240 to 1243 (YGER) is interaction with histone H3. C1254 is a Zn(2+) binding site. Residue R1255 participates in S-adenosyl-L-methionine binding. Zn(2+) is bound by residues C1256 and C1261. The segment at 1271-1296 (RQASAAQEPQENGLPDTSSAAAADPL) is disordered.

This sequence belongs to the class V-like SAM-binding methyltransferase superfamily. As to quaternary structure, interacts with WIZ. Part of the E2F6.com-1 complex in G0 phase composed of E2F6, MGA, MAX, TFDP1, CBX3, BAT8, EHMT1, RING1, RNF2, MBLR, L3MBTL2 and YAF2. Interacts with MPHOSPH8. Interacts with CDYL. Interacts with REST only in the presence of CDYL. Part of a complex containing at least CDYL, REST, WIZ, SETB1, EHMT1 and EHMT2. Heterodimer; heterodimerizes with EHMT2. Interacts (via ANK repeats) with RELA (when monomethylated at 'Lys-310'). Interacts with Baz2b. As to expression, ubiquitous.

The protein resides in the nucleus. It is found in the chromosome. It carries out the reaction N(6)-methyl-L-lysyl(9)-[histone H3] + S-adenosyl-L-methionine = N(6),N(6)-dimethyl-L-lysyl(9)-[histone H3] + S-adenosyl-L-homocysteine + H(+). The enzyme catalyses L-lysyl(9)-[histone H3] + S-adenosyl-L-methionine = N(6)-methyl-L-lysyl(9)-[histone H3] + S-adenosyl-L-homocysteine + H(+). Methyltransferase activity is inhibited by BIX-01294. Efficiently inhibited by compound E72, a BIX-01294 derivative in which the diazepane ring and the benzyl are replaced with a 3-dimethylaminopropyl and a 5-aminopentyl group at sites B and C, respectively. Histone methyltransferase that specifically mono- and dimethylates 'Lys-9' of histone H3 (H3K9me1 and H3K9me2, respectively) in euchromatin. H3K9me represents a specific tag for epigenetic transcriptional repression by recruiting HP1 proteins to methylated histones. Also weakly methylates 'Lys-27' of histone H3 (H3K27me). Also required for DNA methylation, the histone methyltransferase activity is not required for DNA methylation, suggesting that these 2 activities function independently. Probably targeted to histone H3 by different DNA-binding proteins like E2F6, MGA, MAX and/or DP1. During G0 phase, it probably contributes to silencing of MYC- and E2F-responsive genes, suggesting a role in G0/G1 transition in cell cycle. In addition to the histone methyltransferase activity, also methylates non-histone proteins: mediates dimethylation of 'Lys-373' of p53/TP53. Represses the expression of mitochondrial function-related genes, perhaps by occupying their promoter regions, working in concert with probable chromatin reader Baz2b. The sequence is that of Histone-lysine N-methyltransferase EHMT1 (Ehmt1) from Mus musculus (Mouse).